We begin with the raw amino-acid sequence, 513 residues long: GMP synthase [glutamine-hydrolyzing] (513 aa).

Residues 9–198 (LILVLDFGSQ…VRRVCDCIGE (190 aa)) form the Glutamine amidotransferase type-1 domain. The active-site Nucleophile is cysteine 86. Residues histidine 172 and glutamate 174 contribute to the active site. The 190-residue stretch at 199–388 (WSMENFIEIE…LGIPEHLVWR (190 aa)) folds into the GMPS ATP-PPase domain. 226–232 (SGGVDSS) provides a ligand contact to ATP.

Homodimer.

The enzyme catalyses XMP + L-glutamine + ATP + H2O = GMP + L-glutamate + AMP + diphosphate + 2 H(+). It functions in the pathway purine metabolism; GMP biosynthesis; GMP from XMP (L-Gln route): step 1/1. Its function is as follows. Catalyzes the synthesis of GMP from XMP. The chain is GMP synthase [glutamine-hydrolyzing] from Staphylococcus saprophyticus subsp. saprophyticus (strain ATCC 15305 / DSM 20229 / NCIMB 8711 / NCTC 7292 / S-41).